The primary structure comprises 304 residues: MTRQMILAVGQQGPIARAETREQVVGRLLDMLTNAASRGVNFIVFPELALTTFFPRWHFTDEAELDSFYETEMPGPVVRPLFETAAELGIGFNLGYAELVVEGGVKRRFNTSILVDKSGKIVGKYRKIHLPGHKEYEAYRPFQHLEKRYFEPGDLGFPVYDVDAAKMGMFICNDRRWPETWRVMGLKGAEIICGGYNTPTHNPPVPQHDHLTSFHHLLSMQAGSYQNGAWSAAAGKVGMEEGCMLLGHSCIVAPTGEIVALTTTLEDEVITAAVDLDRCRELREHIFNFKAHRQPQHYGLIAEF.

Positions 5-276 (MILAVGQQGP…DEVITAAVDL (272 aa)) constitute a CN hydrolase domain. Active-site residues include Glu-47, Lys-127, and Cys-172.

In terms of assembly, homotetramer.

The enzyme catalyses an N-carbamoyl-D-amino acid + H2O + 2 H(+) = a D-alpha-amino acid + NH4(+) + CO2. Its function is as follows. The enzyme catalyzes the hydrolysis of N-carbamoyl-D-amino acids to the corresponding which are useful intermediates in the preparation of beta-lactam antibiotics. Industrial production of beta-lactam antibiotics is now being developed using this enzyme. The chain is N-carbamoyl-D-amino acid hydrolase from Rhizobium radiobacter (Agrobacterium tumefaciens).